We begin with the raw amino-acid sequence, 376 residues long: Bifunctional enzyme IspD/IspF (376 aa).

Residues 1–220 (MRIAAILVAG…RSMSISMIPR (220 aa)) are 2-C-methyl-D-erythritol 4-phosphate cytidylyltransferase. A 2-C-methyl-D-erythritol 2,4-cyclodiphosphate synthase region spans residues 220 to 376 (RIGTGYDVHA…QAAVIIMIPA (157 aa)). A divalent metal cation-binding residues include D226 and H228. 4-CDP-2-C-methyl-D-erythritol 2-phosphate contacts are provided by residues 226–228 (DVH) and 252–253 (HS). H260 contributes to the a divalent metal cation binding site. 4-CDP-2-C-methyl-D-erythritol 2-phosphate-binding positions include 274–276 (DIG), 350–353 (TTSE), F357, and R360.

It in the N-terminal section; belongs to the IspD/TarI cytidylyltransferase family. IspD subfamily. The protein in the C-terminal section; belongs to the IspF family. A divalent metal cation serves as cofactor.

It carries out the reaction 2-C-methyl-D-erythritol 4-phosphate + CTP + H(+) = 4-CDP-2-C-methyl-D-erythritol + diphosphate. The enzyme catalyses 4-CDP-2-C-methyl-D-erythritol 2-phosphate = 2-C-methyl-D-erythritol 2,4-cyclic diphosphate + CMP. The protein operates within isoprenoid biosynthesis; isopentenyl diphosphate biosynthesis via DXP pathway; isopentenyl diphosphate from 1-deoxy-D-xylulose 5-phosphate: step 2/6. Its pathway is isoprenoid biosynthesis; isopentenyl diphosphate biosynthesis via DXP pathway; isopentenyl diphosphate from 1-deoxy-D-xylulose 5-phosphate: step 4/6. Its function is as follows. Bifunctional enzyme that catalyzes the formation of 4-diphosphocytidyl-2-C-methyl-D-erythritol from CTP and 2-C-methyl-D-erythritol 4-phosphate (MEP) (IspD), and catalyzes the conversion of 4-diphosphocytidyl-2-C-methyl-D-erythritol 2-phosphate (CDP-ME2P) to 2-C-methyl-D-erythritol 2,4-cyclodiphosphate (ME-CPP) with a corresponding release of cytidine 5-monophosphate (CMP) (IspF). The chain is Bifunctional enzyme IspD/IspF from Granulibacter bethesdensis (strain ATCC BAA-1260 / CGDNIH1).